The sequence spans 100 residues: Aspartyl/glutamyl-tRNA(Asn/Gln) amidotransferase subunit C (100 aa).

The protein belongs to the GatC family. As to quaternary structure, heterotrimer of A, B and C subunits.

It carries out the reaction L-glutamyl-tRNA(Gln) + L-glutamine + ATP + H2O = L-glutaminyl-tRNA(Gln) + L-glutamate + ADP + phosphate + H(+). It catalyses the reaction L-aspartyl-tRNA(Asn) + L-glutamine + ATP + H2O = L-asparaginyl-tRNA(Asn) + L-glutamate + ADP + phosphate + 2 H(+). Its function is as follows. Allows the formation of correctly charged Asn-tRNA(Asn) or Gln-tRNA(Gln) through the transamidation of misacylated Asp-tRNA(Asn) or Glu-tRNA(Gln) in organisms which lack either or both of asparaginyl-tRNA or glutaminyl-tRNA synthetases. The reaction takes place in the presence of glutamine and ATP through an activated phospho-Asp-tRNA(Asn) or phospho-Glu-tRNA(Gln). The sequence is that of Aspartyl/glutamyl-tRNA(Asn/Gln) amidotransferase subunit C from Streptococcus mutans serotype c (strain ATCC 700610 / UA159).